A 218-amino-acid polypeptide reads, in one-letter code: Thiopurine S-methyltransferase (218 aa).

Trp10, Leu45, Glu66, and Arg123 together coordinate S-adenosyl-L-methionine.

It belongs to the class I-like SAM-binding methyltransferase superfamily. TPMT family.

The protein localises to the cytoplasm. The enzyme catalyses S-adenosyl-L-methionine + a thiopurine = S-adenosyl-L-homocysteine + a thiopurine S-methylether.. The sequence is that of Thiopurine S-methyltransferase from Shewanella sp. (strain ANA-3).